The following is a 446-amino-acid chain: AP-2 complex subunit mu (446 aa).

A phosphoserine mark is found at Ser145, Ser151, and Ser152. Thr157 carries the post-translational modification Phosphothreonine. The region spanning 177–445 (KNSIYIDIVE…STRAGTCEIR (269 aa)) is the MHD domain.

Belongs to the adaptor complexes medium subunit family. Adaptor protein complex 2 (AP-2) is a heterotetramer composed of two large adaptins (alpha-type subunit apl3 and beta-type subunit apl1), a medium chain (mu-type subunit apm4) and a small adaptin (sigma-type subunit aps2).

The protein localises to the cell membrane. It localises to the membrane. It is found in the coated pit. Functionally, component of the adaptor complexes which link clathrin to receptors in coated vesicles. Clathrin-associated protein complexes are believed to interact with the cytoplasmic tails of membrane proteins, leading to their selection and concentration. AP50 is a subunit of the plasma membrane adaptor (Potential). The protein is AP-2 complex subunit mu (apm4) of Schizosaccharomyces pombe (strain 972 / ATCC 24843) (Fission yeast).